Here is a 559-residue protein sequence, read N- to C-terminus: Germacrene A synthase 1 (559 aa).

Positions 312, 316, 456, 460, and 464 each coordinate Mg(2+). Residues 312–316 carry the DDXXD motif motif; it reads DDTYD.

This sequence belongs to the terpene synthase family. In terms of assembly, monomer. The cofactor is Mg(2+). Mainly expressed in sunflower trichomes.

It carries out the reaction (2E,6E)-farnesyl diphosphate = (+)-(R)-germacrene A + diphosphate. The protein operates within secondary metabolite biosynthesis; terpenoid biosynthesis. In terms of biological role, sesquiterpene synthase involved in germacrene A biosynthesis. Germacrene A is a precursor of several sesquiterpene lactones. The protein is Germacrene A synthase 1 of Helianthus annuus (Common sunflower).